The chain runs to 401 residues: Lipid-A-disaccharide synthase (401 aa).

This sequence belongs to the LpxB family.

It carries out the reaction a lipid X + a UDP-2-N,3-O-bis[(3R)-3-hydroxyacyl]-alpha-D-glucosamine = a lipid A disaccharide + UDP + H(+). It functions in the pathway bacterial outer membrane biogenesis; LPS lipid A biosynthesis. Condensation of UDP-2,3-diacylglucosamine and 2,3-diacylglucosamine-1-phosphate to form lipid A disaccharide, a precursor of lipid A, a phosphorylated glycolipid that anchors the lipopolysaccharide to the outer membrane of the cell. In Ruegeria pomeroyi (strain ATCC 700808 / DSM 15171 / DSS-3) (Silicibacter pomeroyi), this protein is Lipid-A-disaccharide synthase.